A 472-amino-acid chain; its full sequence is FAD-linked oxidoreductase azaL (472 aa).

An N-terminal signal peptide occupies residues 1–18 (MFRTILLCSLGLTTLSSA). N-linked (GlcNAc...) asparagine glycans are attached at residues asparagine 22, asparagine 44, asparagine 102, asparagine 123, asparagine 227, asparagine 246, asparagine 273, asparagine 305, asparagine 318, asparagine 390, and asparagine 415. The FAD-binding PCMH-type domain maps to 54–228 (TTYDAPTYIG…TSATYKIYNA (175 aa)).

This sequence belongs to the oxygen-dependent FAD-linked oxidoreductase family.

The protein operates within secondary metabolite biosynthesis. FAD-linked oxidoreductase; part of the gene cluster that mediates the biosynthesis of azaphilones, a class of fungal metabolites characterized by a highly oxygenated pyrano-quinone bicyclic core and exhibiting a broad range of bioactivities. In the first step, the non-reducing polyketide synthase azaA forms the hexaketide precursor from successive condensations of five malonyl-CoA units, presumably with a simple acetyl-CoA starter unit. The reactive polyketide chain then undergoes a PT-mediated C2-C7 cyclization to afford the aromatic ring and is eventually released as an aldehyde through the R-domain. The putative ketoreductase azaE is proposed to catalyze the reduction of the terminal ketone resulting in the early culture product FK17-P2a. The monooxygenase azaH was demonstrated to be the only enzyme required to convert FK17-P2a to azanigerone E. AzaH first hydroxylates the benzaldehyde intermediate FK17-P2a at C4, which triggers the formation of the pyran-ring to afford azanigerone E. In parallel, the 2,4-dimethylhexanoyl chain is synthesized by the HR-PKS azaB and is proposed to be transferred to the C4-hydroxyl of azanigerone E by the acyltransferase azaD directly from the ACP domain of azaB. Alternatively, the 2,4-dimethyl-hexanoyl chain may be offloaded from the HR-PKS as a carboxylic acid and converted to an acyl-CoA by azaF. The resulting acyl-CoA molecule could then be taken up as a substrate by AzaD to form azanigerone B. To yield the carboxylic acid substituent in azanigerone A, the hydroxypropyl side chain of azanigerone B would need to undergo a C-C oxidative cleavage catalyzed by cytochrome P450 AzaI. AzaI is proposed to act on a vicinal diol that leads to a C-C bond scission either through an alkoxyradical intermediate or a peroxy complex. In the biosynthesis of azanigerone A, azanigerone B first undergoes hydroxylation at C10, possibly catalyzed by one of the two FAD-dependent monooxygenases encoded in the cluster, azaG or azaL, resulting in the vicinal diol azanigerone C. Oxidative cleavage of azanigerone C by azaI would yield the corresponding aldehyde derivative of azanigerone A. Finally, the dehydrogenase azaJ is proposed to convert the aldehyde functional group into the carboxylic acid, completing the conversion from azanigerone B to azanigerone A. Alternatively, the oxidation of aldehyde to carboxylic acid may be catalyzed by the same P450 enzyme azaI via consecutive oxidation or by endogenous alcohol dehydrogenase. The sequence is that of FAD-linked oxidoreductase azaL from Aspergillus niger (strain ATCC 1015 / CBS 113.46 / FGSC A1144 / LSHB Ac4 / NCTC 3858a / NRRL 328 / USDA 3528.7).